We begin with the raw amino-acid sequence, 261 residues long: Anamorsin homolog (261 aa).

Positions 4–134 (VQENNQVLYI…EIGSAAKLSL (131 aa)) are N-terminal SAM-like domain. Residues 134-173 (LGGGANKAKVAAVWKLDVDDDGEAEERIDEDELLDEEDKV) form a linker region. Positions 183, 192, 195, and 197 each coordinate [2Fe-2S] cluster. A fe-S binding site A region spans residues 183 to 197 (CGTTGKRKACKDCSC). [4Fe-4S] cluster-binding residues include Cys-222, Cys-225, Cys-233, and Cys-236. 2 consecutive short sequence motifs (cx2C motif) follow at residues 222–225 (CGSC) and 233–236 (CATC). The tract at residues 222 to 236 (CGSCYLGDAFRCATC) is fe-S binding site B.

This sequence belongs to the anamorsin family. Monomer. It depends on [2Fe-2S] cluster as a cofactor. The cofactor is [4Fe-4S] cluster.

The protein localises to the cytoplasm. It localises to the mitochondrion intermembrane space. Component of the cytosolic iron-sulfur (Fe-S) protein assembly (CIA) machinery. Required for the maturation of extramitochondrial Fe-S proteins. Part of an electron transfer chain functioning in an early step of cytosolic Fe-S biogenesis, facilitating the de novo assembly of a [4Fe-4S] cluster on the cytosolic Fe-S scaffold complex. Electrons are transferred from NADPH via a FAD- and FMN-containing diflavin oxidoreductase. Together with the diflavin oxidoreductase, also required for the assembly of the diferric tyrosyl radical cofactor of ribonucleotide reductase (RNR), probably by providing electrons for reduction during radical cofactor maturation in the catalytic small subunit. This is Anamorsin homolog from Culex quinquefasciatus (Southern house mosquito).